A 430-amino-acid polypeptide reads, in one-letter code: Putative membrane fusion protein SilB (430 aa).

Residues 1–28 (MASLKIKYAAIIISSLIAGGLISVTAWQ) form the signal peptide. The segment at 407 to 430 (RHPEKTENSMPAMSEQPVNMHSGH) is disordered. Residues 414-430 (NSMPAMSEQPVNMHSGH) are compositionally biased toward polar residues.

The protein belongs to the membrane fusion protein (MFP) (TC 8.A.1) family.

Component of the sil cation efflux system that confers resistance to silver. May be part of a three-component cation/proton antiporter. The polypeptide is Putative membrane fusion protein SilB (silB) (Salmonella typhimurium).